Here is a 488-residue protein sequence, read N- to C-terminus: Histamine H1 receptor (488 aa).

Residues 1 to 38 (MSFLPGMTPVTLSNFSWALEDRMLEGNSTTTPTRQLMP) lie on the Extracellular side of the membrane. 2 N-linked (GlcNAc...) asparagine glycosylation sites follow: Asn-14 and Asn-27. Residues 39-59 (LVVVLSSVSLVTVALNLLVLY) traverse the membrane as a helical segment. The Cytoplasmic portion of the chain corresponds to 60-73 (AVRSERKLHTVGNL). Residues 74 to 98 (YIVSLSVADLIVGAVVMPMSILYLH) traverse the membrane as a helical segment. The Extracellular segment spans residues 99–106 (RSAWILGR). A helical transmembrane segment spans residues 107-132 (PLCLFWLSMDYVASTASIFSVFILCI). Residues Cys-109 and Cys-189 are joined by a disulfide bond. Residues Asp-116 and Thr-121 each coordinate histamine. An important for agonist binding region spans residues 116–121 (DYVAST). At 133-153 (DRYRSVQQPLRYLRYRTKTRA) the chain is on the cytoplasmic side. A phosphothreonine mark is found at Thr-149 and Thr-151. Residues 154-173 (SATILGAWLLSFLWVIPILG) traverse the membrane as a helical segment. The Extracellular segment spans residues 174–197 (WHHFMAPTSEPREKKCETDFYDVT). A helical transmembrane segment spans residues 198 to 220 (WFKVMTAIINFYLPTLLMLWFYI). A histamine-binding site is contributed by Asn-207. Over 221-417 (RIYKAVRRHC…LNRERKAAKQ (197 aa)) the chain is Cytoplasmic. Position 239 is a phosphoserine (Ser-239). Positions 259–274 (RMGKESPWEDPKRCSK) are enriched in basic and acidic residues. The segment at 259 to 285 (RMGKESPWEDPKRCSKDASGVHTPMPS) is disordered. Phosphoserine occurs at positions 345, 381, 383, 397, and 399. Residues 418–441 (LGCIMAAFILCWIPYFVFFMVIAF) form a helical membrane-spanning segment. The important for agonist binding stretch occupies residues 425 to 429 (FILCW). Tyr-432 contributes to the histamine binding site. A disulfide bond links Cys-442 and Cys-445. Over 442 to 447 (CKSCSN) the chain is Extracellular. Residues 448–470 (EPVHMFTIWLGYLNSTLNPLIYP) traverse the membrane as a helical segment. At 471 to 488 (LCNENFRKTFKRILRIPP) the chain is on the cytoplasmic side.

Belongs to the G-protein coupled receptor 1 family. In terms of processing, phosphorylation at sites in the second and third cytoplasmic loops independently contribute to agonist-induced receptor down-regulation.

It localises to the cell membrane. G-protein-coupled receptor for histamine, a biogenic amine that functions as an immune modulator and a neurotransmitter. Through the H1 receptor, histamine mediates the contraction of smooth muscles and increases capillary permeability due to contraction of terminal venules. Also mediates neurotransmission in the central nervous system and thereby regulates circadian rhythms, emotional and locomotor activities as well as cognitive functions. This is Histamine H1 receptor from Cavia porcellus (Guinea pig).